The primary structure comprises 239 residues: Diablo IAP-binding mitochondrial protein (239 aa).

A mitochondrion-targeting transit peptide spans 1-21; that stretch reads MAALKSWLSRSVTSFFRYRQC. An IAP-binding motif is present at residues 56–60; sequence AVPIA. The segment at 217–239 is disordered; that stretch reads RQKTQEEGEERAESEQEAYLRED.

The protein belongs to the Smac/DIABLO protein family. Homodimer. Interacts with BIRC2/c-IAP1 (via BIR3 domain). Interacts with BIRC6/BRUCE; inhibits BIRC6 activity. Interacts with BIRC7/livin. Interacts with XIAP/BIRC4 (via BIR3 domain). Interacts with the monomeric and dimeric form of BIRC5/survivin. Interacts with AREL1 (via HECT domain); in the cytoplasm following induction of apoptosis. Interacts with BEX3. Ubiquitinated by BIRC7/livin. Ubiquitinated by BIRC6. In terms of processing, the precursor form is proteolytically cleaved by mitochondrial processing peptidase MPP to remove the transit peptide and produce an intermediate form. This is then processed by PARL to produce the mature cleaved form which is released from mitochondria into the cytosol in apoptotic cells. In terms of tissue distribution, ubiquitously expressed with highest expression in testis. Expression is also high in heart, liver, kidney, spleen, prostate and ovary. Low in brain, lung, thymus and peripheral blood leukocytes. Isoform 3 is ubiquitously expressed.

The protein localises to the mitochondrion. Its subcellular location is the cytoplasm. The protein resides in the cytosol. Functionally, promotes apoptosis by activating caspases in the cytochrome c/Apaf-1/caspase-9 pathway. Acts by opposing the inhibitory activity of inhibitor of apoptosis proteins (IAP). Inhibits the activity of BIRC6/BRUCE by inhibiting its binding to caspases. Attenuates the stability and apoptosis-inhibiting activity of XIAP/BIRC4 by promoting XIAP/BIRC4 ubiquitination and degradation through the ubiquitin-proteasome pathway. Also disrupts XIAP/BIRC4 interacting with processed caspase-9 and promotes caspase-3 activation. Its function is as follows. Defective in the capacity to down-regulate the XIAP/BIRC4 abundance. This Homo sapiens (Human) protein is Diablo IAP-binding mitochondrial protein.